A 1022-amino-acid polypeptide reads, in one-letter code: GPI ethanolamine phosphate transferase 1 (1022 aa).

Topologically, residues 1 to 6 (MARVGR) are cytoplasmic. Residues 7–27 (VGFLTLAVVFHLMYAYSIFDI) traverse the membrane as a helical segment. The Lumenal portion of the chain corresponds to 28–466 (YFVSPIVSGM…LQTYDWLFLR (439 aa)). N-linked (GlcNAc...) asparagine glycans are attached at residues Asn-148 and Asn-433. Residues 467 to 487 (TIVSLGYLGWIAYALTTVIDL) traverse the membrane as a helical segment. The Cytoplasmic segment spans residues 488 to 498 (HVLHGKSESNR). Residues 499-519 (TTFSIMFFSSILVALFSVLLY) form a helical membrane-spanning segment. Over 520-560 (QGSSWRYYLYALFPIFFWEEVFARRKALLAGREILLGHVHS) the chain is Lumenal. Residues 561–581 (VSGYFAFAIQLLLYVGVLEAL) traverse the membrane as a helical segment. The Cytoplasmic segment spans residues 582–589 (VQSYFHRD). A helical membrane pass occupies residues 590–610 (IFTVCFILGGFWPITYGTKFL). Residues 611–614 (GQHK) are Lumenal-facing. The chain crosses the membrane as a helical span at residues 615–635 (LLSASWALGCFLMSIFTLLPA). Topologically, residues 636–640 (NKVED) are cytoplasmic. The chain crosses the membrane as a helical span at residues 641–661 (MMMISCGSLLMFLTGLLYLIF). Topologically, residues 662–685 (ERSILGQKRSSDPNSVVSSCGSRT) are lumenal. The chain crosses the membrane as a helical span at residues 686 to 706 (IMGAQVGMILLALIVTRSSVA). Residues 707–713 (SLQAKQG) are Cytoplasmic-facing. Residues 714-734 (LPLGNQVLGWAILVSSLLLPF) form a helical membrane-spanning segment. The Lumenal portion of the chain corresponds to 735–749 (LHRLYPNSHYLHRLM). 2 helical membrane passes run 750 to 770 (VIFL…EGLF) and 771 to 791 (YFVF…IYIH). Topologically, residues 792–837 (TTAPTREQDHSVANGSLPAKKPSPGNTVVVEGQPYRYRTLSVSDAR) are lumenal. N-linked (GlcNAc...) asparagine glycosylation occurs at Asn-805. A helical transmembrane segment spans residues 838–858 (VALFFFFLLQSGFFSTGNIAS). Over 859–880 (VSSFSLDSVYRLIPIFNPFAQG) the chain is Cytoplasmic. The chain crosses the membrane as a helical span at residues 881–901 (ALLILKLLIPFAIISANLGIL). The Lumenal portion of the chain corresponds to 902-910 (NHRLEVAPS). A helical transmembrane segment spans residues 911 to 931 (ALFMVVMSISDVMTLNFFYMV). Over 932 to 947 (RDEGSWLEIGTTISHF) the chain is Cytoplasmic. Residues 948 to 968 (CIASFLCTFVAVLEFLSELFI) traverse the membrane as a helical segment. Topologically, residues 969 to 1022 (SGVDFGHPATTVGSAVAKAVNGSVACGHSPDSDISGEDSTSVGITAKADPDARS) are lumenal. N-linked (GlcNAc...) asparagine glycosylation is present at Asn-989. Residues 998-1022 (PDSDISGEDSTSVGITAKADPDARS) form a disordered region.

The protein belongs to the PIGG/PIGN/PIGO family. PIGN subfamily.

It is found in the endoplasmic reticulum membrane. It participates in glycolipid biosynthesis; glycosylphosphatidylinositol-anchor biosynthesis. Its function is as follows. Ethanolamine phosphate transferase involved in glycosylphosphatidylinositol-anchor biosynthesis. Transfers ethanolamine phosphate to the first alpha-1,4-linked mannose of the glycosylphosphatidylinositol precursor of GPI-anchor. The protein is GPI ethanolamine phosphate transferase 1 (mcd4) of Aspergillus oryzae (strain ATCC 42149 / RIB 40) (Yellow koji mold).